The following is a 200-amino-acid chain: Phospholipase A2 inhibitor CNF (200 aa).

A signal peptide spans 1-19 (MKYLHTICLLFIFVARGNS). 8 disulfide bridges follow: C22-C46, C25-C32, C39-C67, C73-C94, C95-C100, C118-C143, C136-C165, and C169-C191. An N-linked (GlcNAc...) asparagine; partial glycan is attached at N176.

As to quaternary structure, occurs as a mixture of oligomers. Tetrameric arrangement appears to be the predominant quaternary structure. Interacts with phospholipase A2 crotoxin basic subunit CBd; the interaction leads to dissociation of the CA-CB heterodimer and to inhibition of PLA2 activity of the CB subunit. Post-translationally, the carbohydrate moiety increases the inhibition capacity of CNF, but is not essential for activity and for oligomerization. Expressed by the liver.

It localises to the secreted. Functionally, inhibits the PLA2 activity of crotoxin (CTX) by replacing the acid subunit (CA) in the CTX complex. Displays a pro-inflammatory action through activation of important main signaling pathways for human leukocytes, in vitro. Abolishes both the muscle-paralyzing and muscle-damaging activities of CTX in mice phrenic nerve-diaphragm muscle preparations. This chain is Phospholipase A2 inhibitor CNF, found in Crotalus durissus terrificus (South American rattlesnake).